The chain runs to 338 residues: Aspartate carbamoyltransferase catalytic subunit (338 aa).

Arg-72 and Thr-73 together coordinate carbamoyl phosphate. Position 100 (Lys-100) interacts with L-aspartate. 3 residues coordinate carbamoyl phosphate: Arg-122, His-152, and Gln-155. L-aspartate-binding residues include Arg-186 and Arg-243. Residues Gly-284 and Pro-285 each coordinate carbamoyl phosphate.

It belongs to the aspartate/ornithine carbamoyltransferase superfamily. ATCase family. Heterododecamer (2C3:3R2) of six catalytic PyrB chains organized as two trimers (C3), and six regulatory PyrI chains organized as three dimers (R2).

It carries out the reaction carbamoyl phosphate + L-aspartate = N-carbamoyl-L-aspartate + phosphate + H(+). It functions in the pathway pyrimidine metabolism; UMP biosynthesis via de novo pathway; (S)-dihydroorotate from bicarbonate: step 2/3. Its function is as follows. Catalyzes the condensation of carbamoyl phosphate and aspartate to form carbamoyl aspartate and inorganic phosphate, the committed step in the de novo pyrimidine nucleotide biosynthesis pathway. This Acinetobacter baumannii (strain ACICU) protein is Aspartate carbamoyltransferase catalytic subunit.